The following is a 1150-amino-acid chain: MSIRFIYGRAGSGKSHYCLEDIKRRIQEVNDRNLILLVPEQFSFQAEKNLIKSIGEKGTLKAQVLSFRRMAEKVFDEVGGGIKKYINDAGKNILLYKIIEENKNKLKVYKTSAKKQGFVNLVSDIIGEFKKYNISPEFLKENLDSIENKSLKNKLEDIGMLFLEFQNRLSKNYIDLEDTLHILCEKLDKSIIFKNSEVWIDEFSTFTPQEYSIIEKIMCSAYRVNITLCMDALGEYSERESIDLFLPIKITERNILQIAEKNNIIYQKPVNLRCSPCYRFKNSTALQHLQHSLFSYPYKNYEKSTEDINIFKALNKYTEIDYIARDIVKACRDKNLRFKDMAVVTGDLDEYENLIKAVFNQYDIPYFIDKKREIIHNQIVILIISAVEILAKNWSYESVFRYLKTGLLDLEFDDIDILENYVLANGIRGRQWLDTKPWSFKINYGNFKEDDSEEEQEYLNKINCIRDKVREPILKLSNDIKGKKKGRHICEELYNFLCELKIPEKVEELIIEFRNTDRLDKANEYSQIWDIVVDVLDQIVDVLGEQSFGMEIFNEALEIGFSQYEIGVIPPALDQVLVSNITRIKSYNISALYIAGVNDGIFPVTISPEGIFTDQDRDELKQNGLEIAPNTRSRAFEEQFLIYATLTIVDKYLTLTYSMSDEEGKAKRPSVVISMIKKIFPKLQEKSNLLDASGYEGGIEAVNSPKVTFNMLISNIRRNLGHRENINSLWIDVYRWYREHEIWNKRLDTVLGAFYYNNEIKISDLVKIRRLYGKHLNMSVSRLEKFAQCPFGYFVQYGLKVKDRKMYSLSAPDLGSFMHGILERFSIGLKQKSLTWENVDERCCEENINDLVDNVLYDNPNSILNSSKKYKHVTDKLKKTLTRSVWLIAQHMKKGRFIPRAYELVFGEIGDFPPISIELDSGEKVSLTGKVDRVDTAKEDIITYIRIVDYKSGTREFKLSDVYYGFQLQLLIYLDAILTEFDKMTKGKSIPAGLLYFKLEDPIVRTKENIPDHEIEDRITKSLKMNGLLLNDVNVIRQMDTSMEKSSDIISVSIKKDGNLSKSKSSLATRKQFEILRKYVRSTIADLCKKILTGNIEVTPYKNKTKNGCSYCEYSAICQFDTSIKGNKYRIIEDKSDEEIWKHIENKVQE.

Residue 8-15 (GRAGSGKS) coordinates ATP. Cysteine 789, cysteine 1109, cysteine 1112, and cysteine 1118 together coordinate [4Fe-4S] cluster.

The protein belongs to the helicase family. AddB/RexB type 1 subfamily. As to quaternary structure, heterodimer of AddA and AddB. It depends on Mg(2+) as a cofactor. Requires [4Fe-4S] cluster as cofactor.

Its function is as follows. The heterodimer acts as both an ATP-dependent DNA helicase and an ATP-dependent, dual-direction single-stranded exonuclease. Recognizes the chi site generating a DNA molecule suitable for the initiation of homologous recombination. The AddB subunit has 5' -&gt; 3' nuclease activity but not helicase activity. The protein is ATP-dependent helicase/deoxyribonuclease subunit B of Clostridium kluyveri (strain NBRC 12016).